A 485-amino-acid chain; its full sequence is Fumarate hydratase, mitochondrial (485 aa).

Residues 1-19 (MLSASRKLNNQQFLKTIRN) constitute a mitochondrion transit peptide. Residues 118 to 120 (SGT), 150 to 153 (HPND), 160 to 162 (SSN), and Thr-208 contribute to the substrate site. His-209 functions as the Proton donor/acceptor in the catalytic mechanism. Ser-339 is an active-site residue. Substrate contacts are provided by residues Ser-340 and 345–347 (KVN).

The protein belongs to the class-II fumarase/aspartase family. Fumarase subfamily. Homotetramer.

The protein resides in the mitochondrion. Its subcellular location is the cytoplasm. The catalysed reaction is (S)-malate = fumarate + H2O. The protein operates within carbohydrate metabolism; tricarboxylic acid cycle; (S)-malate from fumarate: step 1/1. In terms of biological role, catalyzes the reversible stereospecific interconversion of fumarate to L-malate. Catalyzes the hydration of fumarate to L-malate in the tricarboxylic acid (TCA) cycle to facilitate a transition step in the production of energy in the form of NADH. The protein is Fumarate hydratase, mitochondrial of Dictyostelium discoideum (Social amoeba).